The chain runs to 487 residues: Cysteine--tRNA ligase (487 aa).

C27 provides a ligand contact to Zn(2+). The short motif at 29-39 (ATVQGLPHVGH) is the 'HIGH' region element. Positions 174–194 (IDDMQGAPDADPRGKKDPRDF) are disordered. A compositionally biased stretch (basic and acidic residues) spans 183 to 194 (ADPRGKKDPRDF). C225, H250, and E254 together coordinate Zn(2+). The 'KMSKS' region signature appears at 281-285 (KMSKS). K284 serves as a coordination point for ATP.

Belongs to the class-I aminoacyl-tRNA synthetase family. In terms of assembly, monomer. It depends on Zn(2+) as a cofactor.

The protein localises to the cytoplasm. It catalyses the reaction tRNA(Cys) + L-cysteine + ATP = L-cysteinyl-tRNA(Cys) + AMP + diphosphate. This is Cysteine--tRNA ligase from Arthrobacter sp. (strain FB24).